A 344-amino-acid chain; its full sequence is Dihydroorotase (344 aa).

2 residues coordinate Zn(2+): H14 and H16. Substrate contacts are provided by residues 16–18 (HVR) and N42. Positions 99, 136, and 174 each coordinate Zn(2+). K99 is subject to N6-carboxylysine. H136 contributes to the substrate binding site. Residue L219 participates in substrate binding. Residue D247 coordinates Zn(2+). D247 is an active-site residue. Substrate is bound by residues H251 and A263.

The protein belongs to the metallo-dependent hydrolases superfamily. DHOase family. Class II DHOase subfamily. Homodimer. Zn(2+) serves as cofactor.

The catalysed reaction is (S)-dihydroorotate + H2O = N-carbamoyl-L-aspartate + H(+). It functions in the pathway pyrimidine metabolism; UMP biosynthesis via de novo pathway; (S)-dihydroorotate from bicarbonate: step 3/3. Catalyzes the reversible cyclization of carbamoyl aspartate to dihydroorotate. This Leptothrix cholodnii (strain ATCC 51168 / LMG 8142 / SP-6) (Leptothrix discophora (strain SP-6)) protein is Dihydroorotase.